Here is a 193-residue protein sequence, read N- to C-terminus: Adenine phosphoribosyltransferase (193 aa).

The protein belongs to the purine/pyrimidine phosphoribosyltransferase family. In terms of assembly, homodimer.

The protein resides in the cytoplasm. The catalysed reaction is AMP + diphosphate = 5-phospho-alpha-D-ribose 1-diphosphate + adenine. The protein operates within purine metabolism; AMP biosynthesis via salvage pathway; AMP from adenine: step 1/1. Catalyzes a salvage reaction resulting in the formation of AMP, that is energically less costly than de novo synthesis. The chain is Adenine phosphoribosyltransferase from Chromobacterium violaceum (strain ATCC 12472 / DSM 30191 / JCM 1249 / CCUG 213 / NBRC 12614 / NCIMB 9131 / NCTC 9757 / MK).